Consider the following 253-residue polypeptide: REF/SRPP-like protein OsI_017815 (253 aa).

Residues 1 to 26 (MADSGSDAPISNRPEEEVTVEKTPEM) are disordered. Residues 13-26 (RPEEEVTVEKTPEM) show a composition bias toward basic and acidic residues.

This sequence belongs to the REF/SRPP family.

The protein is REF/SRPP-like protein OsI_017815 of Oryza sativa subsp. indica (Rice).